The primary structure comprises 674 residues: DNA mismatch repair protein MutL (674 aa).

This sequence belongs to the DNA mismatch repair MutL/HexB family.

This protein is involved in the repair of mismatches in DNA. It is required for dam-dependent methyl-directed DNA mismatch repair. May act as a 'molecular matchmaker', a protein that promotes the formation of a stable complex between two or more DNA-binding proteins in an ATP-dependent manner without itself being part of a final effector complex. This is DNA mismatch repair protein MutL from Clostridium perfringens (strain 13 / Type A).